Here is an 84-residue protein sequence, read N- to C-terminus: MVIIRLARGGSKKRPFYNIVATDSRNRRDGRFIERVGFYNPVATKGEALRIAQDRLTYWQGVGAQLSPTVQRLVKEAQKAQPAA.

Belongs to the bacterial ribosomal protein bS16 family.

The chain is Small ribosomal subunit protein bS16 from Burkholderia multivorans (strain ATCC 17616 / 249).